A 355-amino-acid polypeptide reads, in one-letter code: Elongation factor Ts (355 aa).

The involved in Mg(2+) ion dislocation from EF-Tu stretch occupies residues 82 to 85; the sequence is TDFV.

The protein belongs to the EF-Ts family.

Its subcellular location is the cytoplasm. Functionally, associates with the EF-Tu.GDP complex and induces the exchange of GDP to GTP. It remains bound to the aminoacyl-tRNA.EF-Tu.GTP complex up to the GTP hydrolysis stage on the ribosome. This is Elongation factor Ts from Helicobacter pylori (strain HPAG1).